A 273-amino-acid polypeptide reads, in one-letter code: Serine acetyltransferase (273 aa).

Belongs to the transferase hexapeptide repeat family. In terms of assembly, part of the cysteine synthase complex formed at a ratio of 1 copy of this protein and 2 copies of O-acetylserine sulfhydrylase (cysK). The complex reversibly dissociates in the presence of O-acetyl-L-serine in the absence of hydrogen sulfide.

It localises to the cytoplasm. The catalysed reaction is L-serine + acetyl-CoA = O-acetyl-L-serine + CoA. It participates in amino-acid biosynthesis; L-cysteine biosynthesis; L-cysteine from L-serine: step 1/2. With respect to regulation, sensitive to feedback inhibition by L-cysteine. The chain is Serine acetyltransferase (cysE) from Salmonella typhimurium (strain LT2 / SGSC1412 / ATCC 700720).